Consider the following 100-residue polypeptide: Large ribosomal subunit protein eL21 (100 aa).

The protein belongs to the eukaryotic ribosomal protein eL21 family.

The sequence is that of Large ribosomal subunit protein eL21 from Pyrobaculum aerophilum (strain ATCC 51768 / DSM 7523 / JCM 9630 / CIP 104966 / NBRC 100827 / IM2).